Reading from the N-terminus, the 263-residue chain is Shikimate dehydrogenase (NADP(+)) (263 aa).

Residues S16–S18 and T65 contribute to the shikimate site. K69 (proton acceptor) is an active-site residue. Residues N90 and D105 each coordinate shikimate. NADP(+) contacts are provided by residues G125–S129, S181, and L208. Y210 serves as a coordination point for shikimate. G230 contacts NADP(+). Residue Q237 participates in shikimate binding.

The protein belongs to the shikimate dehydrogenase family. Homodimer.

It catalyses the reaction shikimate + NADP(+) = 3-dehydroshikimate + NADPH + H(+). Its pathway is metabolic intermediate biosynthesis; chorismate biosynthesis; chorismate from D-erythrose 4-phosphate and phosphoenolpyruvate: step 4/7. Involved in the biosynthesis of the chorismate, which leads to the biosynthesis of aromatic amino acids. Catalyzes the reversible NADPH linked reduction of 3-dehydroshikimate (DHSA) to yield shikimate (SA). In Helicobacter pylori (strain ATCC 700392 / 26695) (Campylobacter pylori), this protein is Shikimate dehydrogenase (NADP(+)).